Reading from the N-terminus, the 719-residue chain is Polyribonucleotide nucleotidyltransferase (719 aa).

2 residues coordinate Mg(2+): aspartate 491 and aspartate 497. The KH domain maps to 558-617 (PRMLTIKINPEKIRDVIGKGGATIRALTEETGTQIDISDDGTIVIASVDETQAKEAQRRI). The 69-residue stretch at 627–695 (GQIYDGSVLR…DKGRLRLSIK (69 aa)) folds into the S1 motif domain.

It belongs to the polyribonucleotide nucleotidyltransferase family. It depends on Mg(2+) as a cofactor.

The protein localises to the cytoplasm. It catalyses the reaction RNA(n+1) + phosphate = RNA(n) + a ribonucleoside 5'-diphosphate. Its function is as follows. Involved in mRNA degradation. Catalyzes the phosphorolysis of single-stranded polyribonucleotides processively in the 3'- to 5'-direction. This is Polyribonucleotide nucleotidyltransferase from Bordetella parapertussis (strain 12822 / ATCC BAA-587 / NCTC 13253).